Reading from the N-terminus, the 267-residue chain is Carboxy-S-adenosyl-L-methionine synthase (267 aa).

Polar residues predominate over residues 1 to 11 (MPNRDTQSQND). A disordered region spans residues 1–25 (MPNRDTQSQNDTPRHSPEAAEPQRD). The segment covering 12-24 (TPRHSPEAAEPQR) has biased composition (basic and acidic residues). S-adenosyl-L-methionine contacts are provided by residues Tyr-59, 84–86 (GCS), 109–110 (DN), 137–138 (DI), Asn-152, and Arg-219.

The protein belongs to the class I-like SAM-binding methyltransferase superfamily. Cx-SAM synthase family. In terms of assembly, homodimer.

It catalyses the reaction prephenate + S-adenosyl-L-methionine = carboxy-S-adenosyl-L-methionine + 3-phenylpyruvate + H2O. Functionally, catalyzes the conversion of S-adenosyl-L-methionine (SAM) to carboxy-S-adenosyl-L-methionine (Cx-SAM). The chain is Carboxy-S-adenosyl-L-methionine synthase from Yersinia pseudotuberculosis serotype O:1b (strain IP 31758).